Consider the following 85-residue polypeptide: UPF0386 protein RHECIAT_CH0001945 (85 aa).

The protein belongs to the UPF0386 family.

In Rhizobium etli (strain CIAT 652), this protein is UPF0386 protein RHECIAT_CH0001945.